We begin with the raw amino-acid sequence, 374 residues long: MSVPAFIDVTEEDQAAELRAYLKSKGAEISEENSEGGLHIDLAQIIEACDVCLKDDDKDVESSMNSVVSLVLILETDKQEALIESLCEKLVKFREGERPSLRLQLLSNLFHGMDKSIPARYTVYCGLIKVAATCGAIIYIPTDLDQVRKWISDWNLSTEKKHIVLRLLYEALVDCKKSDEAAKVMVELLGSYTDDNASQARLDAHKCIVRALKDPKAFLLDHLLALKPVKFLEGELIHDLLTIFVSAKLSSYVKFYQNNKDFIDSLGLSHEQNMEKMRLLTFMGMAVDNKEISFDTIQQELQIGADEVEAFIIDAVKTKMVYCKIDQTQKRVVVSHSTHRTFGKQQWQQLYDTLNTWKQNLNKVKNSLYSISDA.

A PCI domain is found at 180–339; that stretch reads EAAKVMVELL…KRVVVSHSTH (160 aa).

This sequence belongs to the eIF-3 subunit M family. Component of the eukaryotic translation initiation factor 3 (eIF-3) complex, which is composed of 13 subunits: eif3a, eif3b, eif3c, eif3d, eif3e, eif3f, eif3g, eif3h, eif3i, eif3j, eif3k, eif3l and eif3m.

The protein localises to the cytoplasm. Its function is as follows. Component of the eukaryotic translation initiation factor 3 (eIF-3) complex, which is involved in protein synthesis of a specialized repertoire of mRNAs and, together with other initiation factors, stimulates binding of mRNA and methionyl-tRNAi to the 40S ribosome. The eIF-3 complex specifically targets and initiates translation of a subset of mRNAs involved in cell proliferation. The chain is Eukaryotic translation initiation factor 3 subunit M (eif3m) from Xenopus tropicalis (Western clawed frog).